The chain runs to 185 residues: Ribosome-recycling factor (185 aa).

Belongs to the RRF family.

Its subcellular location is the cytoplasm. Functionally, responsible for the release of ribosomes from messenger RNA at the termination of protein biosynthesis. May increase the efficiency of translation by recycling ribosomes from one round of translation to another. This is Ribosome-recycling factor from Shewanella sp. (strain W3-18-1).